The primary structure comprises 110 residues: BET1-like protein (110 aa).

The Cytoplasmic portion of the chain corresponds to 1 to 85 (MADPWNRGHG…MVRSGRDNRK (85 aa)). A t-SNARE coiled-coil homology domain is found at 14–76 (DMLDAENKRM…TGSVKRFSTM (63 aa)). The chain crosses the membrane as a helical; Anchor for type IV membrane protein span at residues 86–106 (ILCYVSVGLVVAFFLLYYLVS). Over 107 to 110 (RMQN) the chain is Lumenal.

Component of a SNARE complex consisting of stx5, ykt6, gosr2 and bet1l.

The protein localises to the golgi apparatus membrane. In terms of biological role, vesicle SNARE required for targeting and fusion of retrograde transport vesicles with the Golgi complex. Required for the integrity of the Golgi complex. This chain is BET1-like protein (bet1l), found in Danio rerio (Zebrafish).